The sequence spans 373 residues: Dual-specificity RNA methyltransferase RlmN (373 aa).

E94 functions as the Proton acceptor in the catalytic mechanism. The region spanning 100–339 (EDDRATLCVS…VIVRKTRGDD (240 aa)) is the Radical SAM core domain. Cysteines 107 and 344 form a disulfide. C114, C118, and C121 together coordinate [4Fe-4S] cluster. Residues 168 to 169 (GE), S200, 222 to 224 (SIH), and N301 contribute to the S-adenosyl-L-methionine site. The active-site S-methylcysteine intermediate is C344.

This sequence belongs to the radical SAM superfamily. RlmN family. It depends on [4Fe-4S] cluster as a cofactor.

It localises to the cytoplasm. It carries out the reaction adenosine(2503) in 23S rRNA + 2 reduced [2Fe-2S]-[ferredoxin] + 2 S-adenosyl-L-methionine = 2-methyladenosine(2503) in 23S rRNA + 5'-deoxyadenosine + L-methionine + 2 oxidized [2Fe-2S]-[ferredoxin] + S-adenosyl-L-homocysteine. The catalysed reaction is adenosine(37) in tRNA + 2 reduced [2Fe-2S]-[ferredoxin] + 2 S-adenosyl-L-methionine = 2-methyladenosine(37) in tRNA + 5'-deoxyadenosine + L-methionine + 2 oxidized [2Fe-2S]-[ferredoxin] + S-adenosyl-L-homocysteine. Specifically methylates position 2 of adenine 2503 in 23S rRNA and position 2 of adenine 37 in tRNAs. m2A2503 modification seems to play a crucial role in the proofreading step occurring at the peptidyl transferase center and thus would serve to optimize ribosomal fidelity. This is Dual-specificity RNA methyltransferase RlmN from Shewanella sp. (strain ANA-3).